The primary structure comprises 640 residues: Chaperone protein HtpG (640 aa).

The tract at residues 1-343 is a; substrate-binding; the sequence is MQTAENIEHL…SSDLPLNVSR (343 aa). Positions 344–564 are b; that stretch reads EILQESKDID…THDVSGNLGR (221 aa). The interval 565 to 640 is c; the sequence is LLKSAGQKVP…LLLQNILSGK (76 aa).

The protein belongs to the heat shock protein 90 family. In terms of assembly, homodimer.

The protein localises to the cytoplasm. In terms of biological role, molecular chaperone. Has ATPase activity. The sequence is that of Chaperone protein HtpG from Nitrosomonas europaea (strain ATCC 19718 / CIP 103999 / KCTC 2705 / NBRC 14298).